The primary structure comprises 172 residues: 3-hydroxydecanoyl-[acyl-carrier-protein] dehydratase (172 aa).

The active site involves histidine 71.

Belongs to the thioester dehydratase family. FabA subfamily. Homodimer.

The protein localises to the cytoplasm. The enzyme catalyses a (3R)-hydroxyacyl-[ACP] = a (2E)-enoyl-[ACP] + H2O. It catalyses the reaction (3R)-hydroxydecanoyl-[ACP] = (2E)-decenoyl-[ACP] + H2O. The catalysed reaction is (2E)-decenoyl-[ACP] = (3Z)-decenoyl-[ACP]. It participates in lipid metabolism; fatty acid biosynthesis. Its function is as follows. Necessary for the introduction of cis unsaturation into fatty acids. Catalyzes the dehydration of (3R)-3-hydroxydecanoyl-ACP to E-(2)-decenoyl-ACP and then its isomerization to Z-(3)-decenoyl-ACP. Can catalyze the dehydratase reaction for beta-hydroxyacyl-ACPs with saturated chain lengths up to 16:0, being most active on intermediate chain length. The protein is 3-hydroxydecanoyl-[acyl-carrier-protein] dehydratase of Vibrio parahaemolyticus serotype O3:K6 (strain RIMD 2210633).